The primary structure comprises 94 residues: Integration host factor subunit beta (94 aa).

Belongs to the bacterial histone-like protein family. In terms of assembly, heterodimer of an alpha and a beta chain.

Functionally, this protein is one of the two subunits of integration host factor, a specific DNA-binding protein that functions in genetic recombination as well as in transcriptional and translational control. This chain is Integration host factor subunit beta (ihfB), found in Dickeya dadantii (strain 3937) (Erwinia chrysanthemi (strain 3937)).